An 86-amino-acid polypeptide reads, in one-letter code: Large ribosomal subunit protein bL27 (86 aa).

Residues 1–22 (MATKKAGGSSRNGRDSAGRRLG) are disordered.

It belongs to the bacterial ribosomal protein bL27 family.

This is Large ribosomal subunit protein bL27 from Rickettsia peacockii (strain Rustic).